The primary structure comprises 102 residues: Lipopolysaccharide assembly protein A (102 aa).

Over 1–2 the chain is Cytoplasmic; the sequence is MK. The helical transmembrane segment at 3 to 23 threads the bilayer; that stretch reads YLLIFLLVLAIFVISVTLGAQ. The Periplasmic segment spans residues 24-43; sequence NDQQVTFNYLLAQGEYRIST. Residues 44 to 64 form a helical membrane-spanning segment; that stretch reads LLAVLFAAGFAIGWLICGLFW. Positions 64–92 form a coiled coil; sequence WLRVRVSLARAERKIKRLENQLSPATDVA. The Cytoplasmic segment spans residues 65 to 102; that stretch reads LRVRVSLARAERKIKRLENQLSPATDVAVVPHSSAAKE.

Belongs to the LapA family.

The protein localises to the cell inner membrane. Involved in the assembly of lipopolysaccharide (LPS). This chain is Lipopolysaccharide assembly protein A, found in Escherichia coli (strain K12).